The chain runs to 102 residues: UPF0147 protein MTH_1407 (102 aa).

The protein belongs to the UPF0147 family.

This is UPF0147 protein MTH_1407 from Methanothermobacter thermautotrophicus (strain ATCC 29096 / DSM 1053 / JCM 10044 / NBRC 100330 / Delta H) (Methanobacterium thermoautotrophicum).